Consider the following 309-residue polypeptide: NAD kinase (309 aa).

The Proton acceptor role is filled by Asp89. NAD(+)-binding positions include 89 to 90, 163 to 164, His174, Arg191, Asp193, and 204 to 209; these read DG, NE, and TAYSLS.

It belongs to the NAD kinase family. A divalent metal cation is required as a cofactor.

The protein resides in the cytoplasm. The enzyme catalyses NAD(+) + ATP = ADP + NADP(+) + H(+). Its function is as follows. Involved in the regulation of the intracellular balance of NAD and NADP, and is a key enzyme in the biosynthesis of NADP. Catalyzes specifically the phosphorylation on 2'-hydroxyl of the adenosine moiety of NAD to yield NADP. The chain is NAD kinase from Shewanella denitrificans (strain OS217 / ATCC BAA-1090 / DSM 15013).